The sequence spans 185 residues: TATA-box-binding protein (185 aa).

2 consecutive repeat copies span residues 3-78 (IQNI…REDL) and 94-176 (IQNI…AEKI).

Belongs to the TBP family.

Functionally, general factor that plays a role in the activation of archaeal genes transcribed by RNA polymerase. Binds specifically to the TATA box promoter element which lies close to the position of transcription initiation. In Methanopyrus kandleri (strain AV19 / DSM 6324 / JCM 9639 / NBRC 100938), this protein is TATA-box-binding protein.